Reading from the N-terminus, the 302-residue chain is Elongation factor Ts (302 aa).

The segment at Thr80 to Val83 is involved in Mg(2+) ion dislocation from EF-Tu.

It belongs to the EF-Ts family.

Its subcellular location is the cytoplasm. Associates with the EF-Tu.GDP complex and induces the exchange of GDP to GTP. It remains bound to the aminoacyl-tRNA.EF-Tu.GTP complex up to the GTP hydrolysis stage on the ribosome. The protein is Elongation factor Ts of Methylibium petroleiphilum (strain ATCC BAA-1232 / LMG 22953 / PM1).